The following is a 116-amino-acid chain: Ferredoxin-thioredoxin reductase, catalytic chain (116 aa).

Residue C57 coordinates [4Fe-4S] cluster. Residue C59 is the Nucleophile of the active site. The cysteines at positions 59 and 89 are disulfide-linked. [4Fe-4S] cluster contacts are provided by C76, C78, and C87.

This sequence belongs to the ferredoxin thioredoxin reductase beta subunit family. As to quaternary structure, heterodimer of subunit A (variable subunit) and subunit B (catalytic subunit). Heterodimeric FTR forms a complex with ferredoxin and thioredoxin. The cofactor is [4Fe-4S] cluster.

It localises to the plastid. The protein localises to the chloroplast. It catalyses the reaction [thioredoxin]-disulfide + 2 reduced [2Fe-2S]-[ferredoxin] + 2 H(+) = [thioredoxin]-dithiol + 2 oxidized [2Fe-2S]-[ferredoxin]. Its function is as follows. Catalytic subunit of the ferredoxin-thioredoxin reductase (FTR), which catalyzes the two-electron reduction of thioredoxins by the electrons provided by reduced ferredoxin. The protein is Ferredoxin-thioredoxin reductase, catalytic chain (ftrB) of Pyropia yezoensis (Susabi-nori).